Reading from the N-terminus, the 603-residue chain is Grainyhead-like protein 3 homolog (603 aa).

Residues 30 to 95 (EAWKTYLENP…QGKKFYHSMD (66 aa)) are transcription activation. The 236-residue stretch at 226–461 (GLKSDFEYTL…DLETQPVLFI (236 aa)) folds into the Grh/CP2 DB domain.

Belongs to the grh/CP2 family. Grainyhead subfamily. In terms of assembly, homodimer, also forms heterodimers with GRHL1 and GRHL2. Interacts with LMO4.

It localises to the nucleus. Functionally, transcription factor playing important roles in primary neurulation and in the differentiation of stratified epithelia of both ectodermal and endodermal origin. Binds directly to the consensus DNA sequence 5'-AACCGGTT-3' acting as an activator and repressor on distinct target genes. Essential for epidermal differentiation and barrier formation at the end of embryogenesis with TGM3 as critical direct target. Exhibits functional redundancy with GRHL2 in epidermal morphogenetic events such as eyelid fusion and epidermal wound repair. Despite being dispensable during normal epidermal homeostasis in the adulthood, is again required for barrier repair after immune-mediated epidermal damage, regulates distinct gene batteries in embryonic epidermal differentiation and adult epidermal barrier reformation after injury. Plays unique and cooperative roles with GRHL2 in establishing distinct zones of primary neurulation. Essential for spinal closure, functions cooperatively with GRHL2 in closure 2 (forebrain/midbrain boundary) and posterior neuropore closure. Also required for proper development of the oral periderm. No genetic interaction with GRHL1, no functional cooperativity due to diverse target gene selectivity. This is Grainyhead-like protein 3 homolog from Mus musculus (Mouse).